The primary structure comprises 281 residues: NADPH-dependent 7-cyano-7-deazaguanine reductase (281 aa).

88–90 (VES) serves as a coordination point for substrate. 90 to 91 (SK) is a binding site for NADPH. C189 serves as the catalytic Thioimide intermediate. D196 acts as the Proton donor in catalysis. Residue 228-229 (HE) coordinates substrate. 257-258 (RG) lines the NADPH pocket.

Belongs to the GTP cyclohydrolase I family. QueF type 2 subfamily. In terms of assembly, homodimer.

It is found in the cytoplasm. It carries out the reaction 7-aminomethyl-7-carbaguanine + 2 NADP(+) = 7-cyano-7-deazaguanine + 2 NADPH + 3 H(+). It participates in tRNA modification; tRNA-queuosine biosynthesis. In terms of biological role, catalyzes the NADPH-dependent reduction of 7-cyano-7-deazaguanine (preQ0) to 7-aminomethyl-7-deazaguanine (preQ1). The polypeptide is NADPH-dependent 7-cyano-7-deazaguanine reductase (Cronobacter sakazakii (strain ATCC BAA-894) (Enterobacter sakazakii)).